A 137-amino-acid polypeptide reads, in one-letter code: Hemoglobin subunit beta (137 aa).

The Globin domain occupies 3–137; it reads HWTQEERDEI…VIDAISKQYH (135 aa). Residues His-54 and His-83 each contribute to the heme b site.

The protein belongs to the globin family. In terms of assembly, heterotetramer of two alpha chains and two beta chains. As to expression, red blood cells.

Functionally, involved in oxygen transport from gills to the various peripheral tissues. This is Hemoglobin subunit beta (HBB) from Mustelus griseus (Spotless smooth-hound).